The sequence spans 601 residues: Leucine-rich repeat-containing protein 40 (601 aa).

21 LRR repeats span residues 33 to 56 (ARKSGQLNLSGRGLTEVPASVWRL), 79 to 101 (QTDLTKLLLSSNKLQSIPDDVKL), 102 to 124 (LPALVVLDIHDNQLSSLPDSIGD), 125 to 148 (LEQLQKLILSHNKLTELPSGVWRL), 150 to 170 (NLRCLHLQQNLIEQIPRDLGQ), 171 to 193 (LVNLDELDLSNNHLIDIPESLAN), 194 to 217 (LQNLVKLDLSCNKLKSLPPAISQM), 219 to 239 (NLRMLDCSRNQMESIPPVLAQ), 240 to 264 (MESLEQLYLRHNKLRYLPELPCCKT), 266 to 285 (KELHCGNNQIEVLEAEHLKH), 286 to 308 (LNALSLLELRDNKVKSLPEEITL), 309 to 334 (LQGLERLDLTNNDISSLPCGLGTLPK), 336 to 355 (KSLSLEGNPLRAIRRDLLTK), 397 to 420 (IKTLKTLDYSEKQDATIPDDVFDA), 423 to 446 (GNPVANVNFSKNQLTAVPHRIVDL), 447 to 469 (KDSLADINLGFNKLTTIPADFCH), 470 to 492 (LKQLMHIDLRNNLLISLPMELEG), 493 to 516 (LIKLRSVILSFNRFKSFPEVLYRI), 518 to 539 (SLETILISSNQVGGIDAVQMKT), 540 to 563 (LSRLSTLDLSNNDIMQVPPELGNC), and 565 to 586 (SLRALMLDGNPFRNPRAAILIK).

In Danio rerio (Zebrafish), this protein is Leucine-rich repeat-containing protein 40 (lrrc40).